A 272-amino-acid polypeptide reads, in one-letter code: MKSTAKMIQRHPFHLVDPSPWPLVAALGGLSLTFGGVLFMHNYEGGGELLCLGFFTILYVMFTWWRDVIREALFEGQHTLAVQQGLRMGMILFIVSEIMFFFAFFWAFFTSSISPVFNIGGVWPPTDVVAISPWGLPFLNTILLLSSGASVTWAHHAIVGGLKKEAMQGLSVTLAFAIAFTAMQGFEYSGAPFGMSDGVYGSVFYMATGFHGFHVIIGTIFLFICTIRLYLSHFSCQHHFGFEAAAWYWHFVDVVWLFLFLTIYWWGFNITV.

7 helical membrane-spanning segments follow: residues proline 20–methionine 40, glycine 45–tryptophan 65, glycine 89–phenylalanine 109, valine 128–glycine 148, alanine 166–phenylalanine 186, phenylalanine 204–isoleucine 224, and tyrosine 248–phenylalanine 268.

This sequence belongs to the cytochrome c oxidase subunit 3 family. Component of the cytochrome c oxidase (complex IV, CIV), a multisubunit enzyme composed of a catalytic core of 3 subunits and several supernumerary subunits. The complex exists as a monomer or a dimer and forms supercomplexes (SCs) in the inner mitochondrial membrane with ubiquinol-cytochrome c oxidoreductase (cytochrome b-c1 complex, complex III, CIII).

Its subcellular location is the mitochondrion inner membrane. The enzyme catalyses 4 Fe(II)-[cytochrome c] + O2 + 8 H(+)(in) = 4 Fe(III)-[cytochrome c] + 2 H2O + 4 H(+)(out). In terms of biological role, component of the cytochrome c oxidase, the last enzyme in the mitochondrial electron transport chain which drives oxidative phosphorylation. The respiratory chain contains 3 multisubunit complexes succinate dehydrogenase (complex II, CII), ubiquinol-cytochrome c oxidoreductase (cytochrome b-c1 complex, complex III, CIII) and cytochrome c oxidase (complex IV, CIV), that cooperate to transfer electrons derived from NADH and succinate to molecular oxygen, creating an electrochemical gradient over the inner membrane that drives transmembrane transport and the ATP synthase. Cytochrome c oxidase is the component of the respiratory chain that catalyzes the reduction of oxygen to water. Electrons originating from reduced cytochrome c in the intermembrane space (IMS) are transferred via the dinuclear copper A center (CU(A)) of subunit 2 and heme A of subunit 1 to the active site in subunit 1, a binuclear center (BNC) formed by heme A3 and copper B (CU(B)). The BNC reduces molecular oxygen to 2 water molecules using 4 electrons from cytochrome c in the IMS and 4 protons from the mitochondrial matrix. The chain is Cytochrome c oxidase subunit 3 (COX3) from Pylaiella littoralis (Seaweed).